A 985-amino-acid polypeptide reads, in one-letter code: Vacuolar membrane protease (985 aa).

The Cytoplasmic segment spans residues 1–20 (MASSRAQRFNPIAFTPWPVT). Residues 21 to 41 (CITTIVYLALLIPILVINLVV) form a helical membrane-spanning segment. Topologically, residues 42-388 (PSAPETNPKG…MFGTAFAVFR (347 aa)) are vacuolar. N-linked (GlcNAc...) asparagine glycosylation is found at Asn-53, Asn-116, and Asn-119. Residues His-175 and Asp-187 each contribute to the Zn(2+) site. Glu-221 functions as the Proton acceptor in the catalytic mechanism. A Zn(2+)-binding site is contributed by Glu-222. N-linked (GlcNAc...) asparagine glycosylation is present at Asn-238. Zn(2+) contacts are provided by Glu-247 and His-320. A helical transmembrane segment spans residues 389 to 409 (LHTLFAISVALLVIAPLVIFV). Topologically, residues 410–440 (TNRMYLFSMSKSLEGTGDQVSLRGLRGFSRT) are cytoplasmic. A helical membrane pass occupies residues 441–461 (PIILVTATTIPICLAYLLEKV). At 462–470 (NPYIVHSSQ) the chain is on the vacuolar side. The chain crosses the membrane as a helical span at residues 471–491 (FSVWSMMFSAWIFLAWFLACA). Topologically, residues 492–502 (ADFFRPSALHR) are cytoplasmic. The helical transmembrane segment at 503-523 (AYSYTWIFIATWIMLVINTVY) threads the bilayer. The Vacuolar portion of the chain corresponds to 524-527 (ANQK). A helical membrane pass occupies residues 528–548 (GIAAGYFLLFYFAGAFLATWI). Residues 549–666 (SYLELFALPR…TLPRWTWVLQ (118 aa)) lie on the Cytoplasmic side of the membrane. The interval 563-612 (ARQTTGRRPSSLSSRLLTSSADELRSNASPSTAEFPGAAGEDTDPTESTS) is disordered. Positions 566 to 582 (TTGRRPSSLSSRLLTSS) are enriched in low complexity. A helical transmembrane segment spans residues 667–687 (LLLLAPIVLILVGQLALFLTA). Topologically, residues 688–700 (SMCQVGSDGVSTF) are vacuolar. The helical transmembrane segment at 701–721 (VVYLACAVFTTLLCIPLFPLI) threads the bilayer. Topologically, residues 722-727 (HRFTYH) are cytoplasmic. Residues 728–748 (IPTFLFLVFIGTLIYNLVAFP) form a helical membrane-spanning segment. The Vacuolar segment spans residues 749–985 (FSPANRLKTF…VEASHSFTIQ (237 aa)). N-linked (GlcNAc...) asparagine glycans are attached at residues Asn-767, Asn-795, and Asn-839.

Belongs to the peptidase M28 family. Zn(2+) serves as cofactor.

It is found in the vacuole membrane. Functionally, may be involved in vacuolar sorting and osmoregulation. This chain is Vacuolar membrane protease, found in Ajellomyces capsulatus (strain G186AR / H82 / ATCC MYA-2454 / RMSCC 2432) (Darling's disease fungus).